Reading from the N-terminus, the 205-residue chain is Large ribosomal subunit protein bL17c (205 aa).

The transit peptide at M1–A89 directs the protein to the chloroplast.

It belongs to the bacterial ribosomal protein bL17 family. Part of the 50S ribosomal subunit.

The protein resides in the plastid. It is found in the chloroplast. Its function is as follows. This protein binds directly to 23S ribosomal RNA. This is Large ribosomal subunit protein bL17c (RPL17) from Nicotiana tabacum (Common tobacco).